The sequence spans 294 residues: Small ribosomal subunit protein uS3 (294 aa).

Residues 39 to 107 (VREYLKTKLK…PVAVNIEEVR (69 aa)) form the KH type-2 domain. Positions 210–294 (RNDLPAVETP…AAPAADVKGE (85 aa)) are disordered. Basic and acidic residues predominate over residues 219 to 238 (PRPDEERRPRGPRRDGRPGG). 2 stretches are compositionally biased toward low complexity: residues 249–258 (RPAAGNSAPA) and 281–294 (VAAP…VKGE).

Belongs to the universal ribosomal protein uS3 family. In terms of assembly, part of the 30S ribosomal subunit. Forms a tight complex with proteins S10 and S14.

Functionally, binds the lower part of the 30S subunit head. Binds mRNA in the 70S ribosome, positioning it for translation. The chain is Small ribosomal subunit protein uS3 from Verminephrobacter eiseniae (strain EF01-2).